The primary structure comprises 289 residues: Thioredoxin-like protein 1 (289 aa).

Residues 2–109 enclose the Thioredoxin domain; the sequence is VGVKPVGSDP…EEKIKQHLEN (108 aa). A disulfide bridge connects residues C34 and C37. Residue S113 is modified to Phosphoserine. In terms of domain architecture, PITH spans 115-285; sequence EDTDIPKGYM…NDFKRVVGKK (171 aa).

Component of the 19S regulatory cap of the 26S proteasome. Interacts with PSMD14/RPN11. Interacts with, and reduces EEF1A1. Ubiquitous.

It localises to the cytoplasm. Its subcellular location is the nucleus. Active thioredoxin with a redox potential of about -250 mV. The polypeptide is Thioredoxin-like protein 1 (TXNL1) (Homo sapiens (Human)).